Here is a 57-residue protein sequence, read N- to C-terminus: uncharacterized protein (57 aa).

A helical transmembrane segment spans residues 4–26 (FMPIRVFLYSYVIINSLLSSFFH).

Its subcellular location is the membrane. This is an uncharacterized protein from Saccharomyces cerevisiae (strain ATCC 204508 / S288c) (Baker's yeast).